The following is a 274-amino-acid chain: Formamidopyrimidine-DNA glycosylase (274 aa).

Pro-2 acts as the Schiff-base intermediate with DNA in catalysis. Glu-3 acts as the Proton donor in catalysis. The Proton donor; for beta-elimination activity role is filled by Lys-57. Positions 92, 111, and 152 each coordinate DNA. The FPG-type zinc finger occupies 237–271 (QVYGRKGEECNDCGSIIEAKVIGQRNSFYCPKCQR). Arg-261 functions as the Proton donor; for delta-elimination activity in the catalytic mechanism.

The protein belongs to the FPG family. In terms of assembly, monomer. Requires Zn(2+) as cofactor.

It catalyses the reaction Hydrolysis of DNA containing ring-opened 7-methylguanine residues, releasing 2,6-diamino-4-hydroxy-5-(N-methyl)formamidopyrimidine.. The catalysed reaction is 2'-deoxyribonucleotide-(2'-deoxyribose 5'-phosphate)-2'-deoxyribonucleotide-DNA = a 3'-end 2'-deoxyribonucleotide-(2,3-dehydro-2,3-deoxyribose 5'-phosphate)-DNA + a 5'-end 5'-phospho-2'-deoxyribonucleoside-DNA + H(+). Involved in base excision repair of DNA damaged by oxidation or by mutagenic agents. Acts as a DNA glycosylase that recognizes and removes damaged bases. Has a preference for oxidized purines, such as 7,8-dihydro-8-oxoguanine (8-oxoG). Has AP (apurinic/apyrimidinic) lyase activity and introduces nicks in the DNA strand. Cleaves the DNA backbone by beta-delta elimination to generate a single-strand break at the site of the removed base with both 3'- and 5'-phosphates. The sequence is that of Formamidopyrimidine-DNA glycosylase from Glaesserella parasuis serovar 5 (strain SH0165) (Haemophilus parasuis).